The chain runs to 505 residues: Protein disulfide-isomerase (505 aa).

Positions 1–20 (MHKAQKFALGLLAAAAVATA) are cleaved as a signal peptide. Thioredoxin domains are found at residues 21 to 128 (SDVV…QSLP) and 335 to 465 (FVAG…ENGK). Catalysis depends on nucleophile residues C50, C53, C385, and C388. 2 disulfides stabilise this stretch: C50–C53 and C385–C388. Positions 470-505 (ISEDAEETSSATETTTETATKSEEAAKETATEHDEL) are disordered. A compositionally biased stretch (low complexity) spans 477 to 488 (TSSATETTTETA). Residues 489 to 505 (TKSEEAAKETATEHDEL) are compositionally biased toward basic and acidic residues. The short motif at 502-505 (HDEL) is the Prevents secretion from ER element.

Belongs to the protein disulfide isomerase family.

The protein localises to the endoplasmic reticulum lumen. It catalyses the reaction Catalyzes the rearrangement of -S-S- bonds in proteins.. In terms of biological role, participates in the folding of proteins containing disulfide bonds, may be involved in glycosylation, prolyl hydroxylation and triglyceride transfer. This chain is Protein disulfide-isomerase, found in Humicola insolens (Soft-rot fungus).